A 339-amino-acid chain; its full sequence is Ketol-acid reductoisomerase (NADP(+)) (339 aa).

The 182-residue stretch at 1-182 (MRVYYDRDAD…GGGRAGIIET (182 aa)) folds into the KARI N-terminal Rossmann domain. NADP(+)-binding positions include 24 to 27 (YGSQ), Arg48, Ser51, Thr53, and 83 to 86 (DELQ). The active site involves His108. Residue Gly134 coordinates NADP(+). The KARI C-terminal knotted domain maps to 183-328 (TFREECETDL…AKLREMMPWI (146 aa)). Mg(2+)-binding residues include Asp191, Glu195, Glu227, and Glu231. Ser252 contributes to the substrate binding site.

This sequence belongs to the ketol-acid reductoisomerase family. Requires Mg(2+) as cofactor.

The catalysed reaction is (2R)-2,3-dihydroxy-3-methylbutanoate + NADP(+) = (2S)-2-acetolactate + NADPH + H(+). It carries out the reaction (2R,3R)-2,3-dihydroxy-3-methylpentanoate + NADP(+) = (S)-2-ethyl-2-hydroxy-3-oxobutanoate + NADPH + H(+). It functions in the pathway amino-acid biosynthesis; L-isoleucine biosynthesis; L-isoleucine from 2-oxobutanoate: step 2/4. The protein operates within amino-acid biosynthesis; L-valine biosynthesis; L-valine from pyruvate: step 2/4. Involved in the biosynthesis of branched-chain amino acids (BCAA). Catalyzes an alkyl-migration followed by a ketol-acid reduction of (S)-2-acetolactate (S2AL) to yield (R)-2,3-dihydroxy-isovalerate. In the isomerase reaction, S2AL is rearranged via a Mg-dependent methyl migration to produce 3-hydroxy-3-methyl-2-ketobutyrate (HMKB). In the reductase reaction, this 2-ketoacid undergoes a metal-dependent reduction by NADPH to yield (R)-2,3-dihydroxy-isovalerate. The sequence is that of Ketol-acid reductoisomerase (NADP(+)) from Rhodopseudomonas palustris (strain BisA53).